Consider the following 479-residue polypeptide: Cyclin-dependent kinase F-1 (479 aa).

The Protein kinase domain maps to 21–418 (YEIFERVGSG…TMEMLNDKYL (398 aa)). ATP contacts are provided by residues 27-35 (VGSGAYADV) and K50. Position 32 is a phosphotyrosine (Y32). D146 functions as the Proton acceptor in the catalytic mechanism. Phosphoserine is present on residues S179, S208, and S247. The interval 187–221 (KLEDKDGETSEPPEVIPDYENSPRQGSDGQEREAM) is disordered. Position 290 is a phosphothreonine (T290). A disordered region spans residues 434–479 (PTMSGPDEDSPRKWNDYREMDSDSDFDGFGPMNVKPTSSGFTIEFP). Over residues 442–454 (DSPRKWNDYREMD) the composition is skewed to basic and acidic residues. Polar residues predominate over residues 468 to 479 (KPTSSGFTIEFP).

This sequence belongs to the protein kinase superfamily. CMGC Ser/Thr protein kinase family. CDC2/CDKX subfamily. As to expression, highly expressed in suspension cell culture. Expressed at low levels in all plant organs.

The enzyme catalyses L-seryl-[protein] + ATP = O-phospho-L-seryl-[protein] + ADP + H(+). It catalyses the reaction L-threonyl-[protein] + ATP = O-phospho-L-threonyl-[protein] + ADP + H(+). It carries out the reaction [DNA-directed RNA polymerase] + ATP = phospho-[DNA-directed RNA polymerase] + ADP + H(+). Functionally, CDK-activating kinase that modulates CDKD-2 and CDKD-3 activities by phosphorylation of the T-loop. Activates CDKD-2 C-terminal domain (CTD) kinase activity. Activates CDKA-1 probably by phosphorylation. Possesses a CDK kinase activity independently of association with cyclin CYCH1-1. Phosphorylates the CTD of the large subunit of RNA polymerase II. The polypeptide is Cyclin-dependent kinase F-1 (CDKF-1) (Arabidopsis thaliana (Mouse-ear cress)).